The chain runs to 234 residues: Large ribosomal subunit protein uL1 (234 aa).

This sequence belongs to the universal ribosomal protein uL1 family. Part of the 50S ribosomal subunit.

Binds directly to 23S rRNA. The L1 stalk is quite mobile in the ribosome, and is involved in E site tRNA release. Its function is as follows. Protein L1 is also a translational repressor protein, it controls the translation of the L11 operon by binding to its mRNA. In Aliivibrio fischeri (strain MJ11) (Vibrio fischeri), this protein is Large ribosomal subunit protein uL1.